A 184-amino-acid chain; its full sequence is Non-specific lipid transfer protein GPI-anchored 6 (184 aa).

The N-terminal stretch at 1–24 (MEKSTRTLFITIVITSMLLGFGNS) is a signal peptide. 4 disulfides stabilise this stretch: Cys33/Cys74, Cys43/Cys58, Cys59/Cys101, and Cys72/Cys111. Residues 138–158 (NSTSPTQIHKDGTGGGKAEPV) are disordered. Ser160 is lipidated: GPI-anchor amidated serine. Positions 161-184 (NGWKEKSWLGVELLIYLLVSLIFF) are cleaved as a propeptide — removed in mature form.

This sequence belongs to the plant LTP family. Preferentially expressed in the shoot apical meristem and the root meristem. Also present in the ovules and developing embryos. Observed in cotyledons, hypocotyls, flowers, leaves and siliques. Up-regulated in the epidermis of stems.

The protein resides in the cell membrane. Lipid transfer protein involved in seed and ovule maturation and development, probably by regulating the fatty acids homeostasis during suberin and sporopollenin biosynthesis or deposition. Contributes to pre-invasive defense against some non-host powdery mildew pathogens by preventing the penetration of the epidermal cell wall by the fungal agents (e.g. Blumeria graminis f. sp. hordei (Bgh)). This Arabidopsis thaliana (Mouse-ear cress) protein is Non-specific lipid transfer protein GPI-anchored 6.